The following is a 142-amino-acid chain: AP-2 complex subunit sigma (142 aa).

The protein belongs to the adaptor complexes small subunit family. Adaptor protein complex 2 (AP-2) is a heterotetramer composed of two large adaptins (alpha-type and beta-type subunits), a medium adaptin (mu-type subunit AP50) and a small adaptin (sigma-type subunit AP17).

The protein resides in the cell membrane. The protein localises to the membrane. Its subcellular location is the coated pit. Its function is as follows. Component of the adaptor complexes which link clathrin to receptors in coated vesicles. Clathrin-associated protein complexes are believed to interact with the cytoplasmic tails of membrane proteins, leading to their selection and concentration. The polypeptide is AP-2 complex subunit sigma (ap2s1) (Dictyostelium discoideum (Social amoeba)).